We begin with the raw amino-acid sequence, 739 residues long: NAD(P)H-quinone oxidoreductase subunit 5, chloroplastic (739 aa).

The next 16 helical transmembrane spans lie at 9–29, 40–60, 89–109, 125–145, 147–167, 185–205, 219–239, 258–278, 286–306, 327–347, 354–374, 396–416, 425–445, 543–563, 602–622, and 717–737; these read WIIP…LILF, WAFQ…YLSI, IDPL…MVLI, FAYM…SNLI, IYIF…FWFT, GDFG…SFEF, NEVN…GAVA, TPIS…FLVA, VIPY…LLGA, LGYM…FHLI, ALLF…VGYS, ITFL…CFWS, WLYS…TAFY, LFPI…GIPF, VVSV…YKPI, and SYLF…YLLF.

The protein belongs to the complex I subunit 5 family. In terms of assembly, NDH is composed of at least 16 different subunits, 5 of which are encoded in the nucleus.

It is found in the plastid. The protein localises to the chloroplast thylakoid membrane. It carries out the reaction a plastoquinone + NADH + (n+1) H(+)(in) = a plastoquinol + NAD(+) + n H(+)(out). It catalyses the reaction a plastoquinone + NADPH + (n+1) H(+)(in) = a plastoquinol + NADP(+) + n H(+)(out). Functionally, NDH shuttles electrons from NAD(P)H:plastoquinone, via FMN and iron-sulfur (Fe-S) centers, to quinones in the photosynthetic chain and possibly in a chloroplast respiratory chain. The immediate electron acceptor for the enzyme in this species is believed to be plastoquinone. Couples the redox reaction to proton translocation, and thus conserves the redox energy in a proton gradient. This chain is NAD(P)H-quinone oxidoreductase subunit 5, chloroplastic (ndhF), found in Solanum tuberosum (Potato).